The following is a 75-amino-acid chain: Probable [Fe-S]-dependent transcriptional repressor (75 aa).

The iron-sulfur cluster site is built by cysteine 55, cysteine 60, cysteine 63, and cysteine 72.

The protein belongs to the FeoC family.

May function as a transcriptional regulator that controls feoABC expression. This chain is Probable [Fe-S]-dependent transcriptional repressor, found in Serratia marcescens.